Reading from the N-terminus, the 181-residue chain is Ribonuclease M5 (181 aa).

The Toprim domain maps to 3 to 86 (KEVIVVEGRD…AYISQEEGTK (84 aa)). Positions 9, 55, and 57 each coordinate Mg(2+).

The protein belongs to the ribonuclease M5 family. The cofactor is Mg(2+).

The protein resides in the cytoplasm. It carries out the reaction Endonucleolytic cleavage of RNA, removing 21 and 42 nucleotides, respectively, from the 5'- and 3'-termini of a 5S-rRNA precursor.. Functionally, required for correct processing of both the 5' and 3' ends of 5S rRNA precursor. Cleaves both sides of a double-stranded region yielding mature 5S rRNA in one step. This is Ribonuclease M5 from Clostridium botulinum (strain Hall / ATCC 3502 / NCTC 13319 / Type A).